Reading from the N-terminus, the 257-residue chain is MIIVLSPAKSLDYDTPPRIKTHTLPDFIERSAVLIETLRKLSPAQIGTLMHISDPLAVLNANRYADWSTEFTADNSKQAVLAFDGDVYGGLDANTLSADDLQFAQQHLRILSGLYGVLRPLDRMQPYRLEMGTRLANPGGKDLYAFWGDDVTLALNALLQADDDPVLVNLASEEYFKVVRPKVLKARIVTPVFEDWKGGRYKIISFYAKRARGLMARYAIEHRIADPRKLKHFDAEGYAFAAEASDDERWVFRRKAA.

This sequence belongs to the UPF0246 family.

The sequence is that of UPF0246 protein RSc2009 from Ralstonia nicotianae (strain ATCC BAA-1114 / GMI1000) (Ralstonia solanacearum).